We begin with the raw amino-acid sequence, 551 residues long: Cilia- and flagella-associated protein 45 (551 aa).

Disordered stretches follow at residues 1–52, 232–256, and 385–415; these read MPLR…KSDS, MEID…ERVR, and EQDA…KKIE. A compositionally biased stretch (low complexity) spans 8 to 18; the sequence is ASSSASTASNR. A coiled-coil region spans residues 276-524; that stretch reads AEHREQEKEQ…EDIKKQKLEE (249 aa). The segment covering 387 to 415 has biased composition (basic and acidic residues); sequence DALRAKRNQEVADREWRRKEKENAQKKIE.

It belongs to the CFAP45 family. In terms of assembly, microtubule inner protein component of sperm flagellar doublet microtubules. Interacts with AK8; dimerization with AK8 may create a cavity at the interface of the dimer that can accommodate AMP. Interacts with CFAP52. Interacts with ENKUR. Directly interacts with DNALI1. Interacts with DNAH11. Interacts with DNAI1. Expressed in respiratory cells and in sperm (at protein level).

The protein resides in the cytoplasm. The protein localises to the cytoskeleton. Its subcellular location is the cilium axoneme. It is found in the flagellum axoneme. It localises to the cell projection. The protein resides in the cilium. The protein localises to the flagellum. Microtubule inner protein (MIP) part of the dynein-decorated doublet microtubules (DMTs) in cilia axoneme, which is required for motile cilia beating. It is an AMP-binding protein that may facilitate dynein ATPase-dependent ciliary and flagellar beating via adenine nucleotide homeostasis. May function as a donor of AMP to AK8 and hence promote ADP production. The protein is Cilia- and flagella-associated protein 45 (Cfap45) of Mus musculus (Mouse).